Here is a 205-residue protein sequence, read N- to C-terminus: Cytochrome c oxidase subunit 2 (205 aa).

Residues H115, C150, E152, C154, H158, and M161 each coordinate Cu cation. Mg(2+) is bound at residue E152.

The protein belongs to the cytochrome c oxidase subunit 2 family. Component of the cytochrome c oxidase (complex IV, CIV), a multisubunit enzyme composed of a catalytic core of 3 subunits and several supernumerary subunits. The complex exists as a monomer or a dimer and forms supercomplexes (SCs) in the inner mitochondrial membrane with ubiquinol-cytochrome c oxidoreductase (cytochrome b-c1 complex, complex III, CIII). The cofactor is Cu cation.

It localises to the mitochondrion inner membrane. The enzyme catalyses 4 Fe(II)-[cytochrome c] + O2 + 8 H(+)(in) = 4 Fe(III)-[cytochrome c] + 2 H2O + 4 H(+)(out). Its function is as follows. Component of the cytochrome c oxidase, the last enzyme in the mitochondrial electron transport chain which drives oxidative phosphorylation. The respiratory chain contains 3 multisubunit complexes succinate dehydrogenase (complex II, CII), ubiquinol-cytochrome c oxidoreductase (cytochrome b-c1 complex, complex III, CIII) and cytochrome c oxidase (complex IV, CIV), that cooperate to transfer electrons derived from NADH and succinate to molecular oxygen, creating an electrochemical gradient over the inner membrane that drives transmembrane transport and the ATP synthase. Cytochrome c oxidase is the component of the respiratory chain that catalyzes the reduction of oxygen to water. Electrons originating from reduced cytochrome c in the intermembrane space (IMS) are transferred via the dinuclear copper A center (CU(A)) of subunit 2 and heme A of subunit 1 to the active site in subunit 1, a binuclear center (BNC) formed by heme A3 and copper B (CU(B)). The BNC reduces molecular oxygen to 2 water molecules using 4 electrons from cytochrome c in the IMS and 4 protons from the mitochondrial matrix. This is Cytochrome c oxidase subunit 2 (COII) from Paramecium tetraurelia.